The chain runs to 451 residues: MENSLWKQCLRRLEQEIPDQQLNTWIRPLQAQEEEDRLRLLAPNRFVLDWVKAHFADRITELLSAQRPDRPPRLELQIGSSAVVAPPRRRQVSVTTPSPSAAADQTPATRSAASNLNSNFTFDTFVEGKSNQLARAASMQVVENPGTAYNPLFLYGGVGLGKTHLMHAVGNAMLRRRPEARVLYLHSERFVADMVKALQHNAINEFKRHYRMVDALLIDDIQFFARKERSQEEFFHTFNALLEGEQQVIMTCDRYPKEVNGLEERLKSRFGWGLTVAIEPPELETRVAILMSKALQEGVDLPHEVAFFIAKRIRSNIRELEGALRRVVANAQFTGQEITVEFTKEALRDLLALQDKLVTIDNIQKTVAEYYKIRVADLLSKRRSRSITRPRQMAMALAKELTSHSLPEIGDAFGGRDHTTVLHACRKVESLCAEDSRIEEDYSNLLRTLST.

A domain I, interacts with DnaA modulators region spans residues 1–82 (MENSLWKQCL…RLELQIGSSA (82 aa)). The tract at residues 82-114 (AVVAPPRRRQVSVTTPSPSAAADQTPATRSAAS) is domain II. Residues 85–112 (APPRRRQVSVTTPSPSAAADQTPATRSA) are disordered. Positions 115–331 (NLNSNFTFDT…GALRRVVANA (217 aa)) are domain III, AAA+ region. ATP is bound by residues G159, G161, K162, and T163. Residues 332–451 (QFTGQEITVE…YSNLLRTLST (120 aa)) form a domain IV, binds dsDNA region.

The protein belongs to the DnaA family. Oligomerizes as a right-handed, spiral filament on DNA at oriC.

It localises to the cytoplasm. Plays an essential role in the initiation and regulation of chromosomal replication. ATP-DnaA binds to the origin of replication (oriC) to initiate formation of the DNA replication initiation complex once per cell cycle. Binds the DnaA box (a 9 base pair repeat at the origin) and separates the double-stranded (ds)DNA. Forms a right-handed helical filament on oriC DNA; dsDNA binds to the exterior of the filament while single-stranded (ss)DNA is stabiized in the filament's interior. The ATP-DnaA-oriC complex binds and stabilizes one strand of the AT-rich DNA unwinding element (DUE), permitting loading of DNA polymerase. After initiation quickly degrades to an ADP-DnaA complex that is not apt for DNA replication. Binds acidic phospholipids. This is Chromosomal replication initiator protein DnaA from Alkalilimnicola ehrlichii (strain ATCC BAA-1101 / DSM 17681 / MLHE-1).